The primary structure comprises 176 residues: RNA pyrophosphohydrolase (176 aa).

A Nudix hydrolase domain is found at 6 to 149 (GYRPNVGIVI…KRDVYRRVMK (144 aa)). The Nudix box signature appears at 38–59 (GGINPGESPEQAMYRELFEEVG).

This sequence belongs to the Nudix hydrolase family. RppH subfamily. Requires a divalent metal cation as cofactor.

Functionally, accelerates the degradation of transcripts by removing pyrophosphate from the 5'-end of triphosphorylated RNA, leading to a more labile monophosphorylated state that can stimulate subsequent ribonuclease cleavage. The sequence is that of RNA pyrophosphohydrolase from Proteus mirabilis (strain HI4320).